A 187-amino-acid polypeptide reads, in one-letter code: Flavin prenyltransferase UbiX (187 aa).

Residues 9–11 (GAS), Ser-34, and Arg-123 contribute to the FMN site. Dimethylallyl phosphate contacts are provided by Tyr-153 and Lys-169.

It belongs to the UbiX/PAD1 family.

It catalyses the reaction dimethylallyl phosphate + FMNH2 = prenylated FMNH2 + phosphate. In terms of biological role, flavin prenyltransferase that catalyzes the synthesis of the prenylated FMN cofactor (prenyl-FMN) for 4-hydroxy-3-polyprenylbenzoic acid decarboxylase UbiD. The prenyltransferase is metal-independent and links a dimethylallyl moiety from dimethylallyl monophosphate (DMAP) to the flavin N5 and C6 atoms of FMN. This Helicobacter pylori (strain ATCC 700392 / 26695) (Campylobacter pylori) protein is Flavin prenyltransferase UbiX.